The chain runs to 507 residues: Steroid 17-alpha-hydroxylase/17,20 lyase (507 aa).

C441 serves as a coordination point for heme.

Belongs to the cytochrome P450 family. Requires heme as cofactor.

The protein resides in the endoplasmic reticulum membrane. It localises to the microsome membrane. The catalysed reaction is a C21-steroid + reduced [NADPH--hemoprotein reductase] + O2 = a 17alpha-hydroxy-C21-steroid + oxidized [NADPH--hemoprotein reductase] + H2O + H(+). The enzyme catalyses progesterone + reduced [NADPH--hemoprotein reductase] + O2 = 17alpha-hydroxyprogesterone + oxidized [NADPH--hemoprotein reductase] + H2O + H(+). It catalyses the reaction pregnenolone + reduced [NADPH--hemoprotein reductase] + O2 = 17alpha-hydroxypregnenolone + oxidized [NADPH--hemoprotein reductase] + H2O + H(+). It carries out the reaction 17alpha-hydroxyprogesterone + reduced [NADPH--hemoprotein reductase] + O2 = androst-4-ene-3,17-dione + acetate + oxidized [NADPH--hemoprotein reductase] + H2O + 2 H(+). The catalysed reaction is 17alpha-hydroxyprogesterone + reduced [NADPH--hemoprotein reductase] + O2 = 16alpha,17alpha-dihydroxyprogesterone + oxidized [NADPH--hemoprotein reductase] + H2O + H(+). The enzyme catalyses 16alpha,17alpha-dihydroxyprogesterone + reduced [NADPH--hemoprotein reductase] + O2 = 6beta,16alpha,17alpha-trihydroxyprogesterone + oxidized [NADPH--hemoprotein reductase] + H2O + H(+). It catalyses the reaction 17alpha-hydroxypregnenolone + reduced [NADPH--hemoprotein reductase] + O2 = 3beta-hydroxyandrost-5-en-17-one + acetate + oxidized [NADPH--hemoprotein reductase] + H2O + 2 H(+). It carries out the reaction 16alpha,17alpha-dihydroxypregnenolone + reduced [NADPH--hemoprotein reductase] + O2 = 3beta,16alpha-dihydroxy-androst-5-en-17-one + acetate + oxidized [NADPH--hemoprotein reductase] + H2O + 2 H(+). The catalysed reaction is 3beta-hydroxyandrost-5-en-17-one + reduced [NADPH--hemoprotein reductase] + O2 = 3beta,16alpha-dihydroxy-androst-5-en-17-one + oxidized [NADPH--hemoprotein reductase] + H2O + H(+). The enzyme catalyses androst-4-ene-3,17-dione + reduced [NADPH--hemoprotein reductase] + O2 = 16alpha-hydroxyandrost-4-ene-3,17-dione + oxidized [NADPH--hemoprotein reductase] + H2O + H(+). Its pathway is steroid hormone biosynthesis. It participates in steroid biosynthesis; glucocorticoid biosynthesis. With respect to regulation, regulated predominantly by intracellular cAMP levels. The 17,20-lyase activity is stimulated by cytochrome b5, which acts as an allosteric effector increasing the Vmax of the lyase activity. In terms of biological role, a cytochrome P450 monooxygenase involved in corticoid and androgen biosynthesis. Catalyzes 17-alpha hydroxylation of C21 steroids, which is common for both pathways. A second oxidative step, required only for androgen synthesis, involves an acyl-carbon cleavage. The 17-alpha hydroxy intermediates, as part of adrenal glucocorticoids biosynthesis pathway, are precursors of cortisol. Hydroxylates steroid hormones, pregnenolone and progesterone to form 17-alpha hydroxy metabolites, followed by the cleavage of the C17-C20 bond to form C19 steroids, dehydroepiandrosterone (DHEA) and androstenedione. Has 16-alpha hydroxylase activity. Catalyzes 16-alpha hydroxylation of 17-alpha hydroxy pregnenolone, followed by the cleavage of the C17-C20 bond to form 16-alpha-hydroxy DHEA. Also 16-alpha hydroxylates androgens, relevant for estriol synthesis. Mechanistically, uses molecular oxygen inserting one oxygen atom into a substrate, and reducing the second into a water molecule, with two electrons provided by NADPH via cytochrome P450 reductase (CPR; NADPH-ferrihemoprotein reductase). This chain is Steroid 17-alpha-hydroxylase/17,20 lyase (Cyp17a1), found in Rattus norvegicus (Rat).